A 941-amino-acid chain; its full sequence is Glycine dehydrogenase (decarboxylating) (941 aa).

Position 692 is an N6-(pyridoxal phosphate)lysine (Lys692).

It belongs to the GcvP family. As to quaternary structure, the glycine cleavage system is composed of four proteins: P, T, L and H. Pyridoxal 5'-phosphate is required as a cofactor.

It catalyses the reaction N(6)-[(R)-lipoyl]-L-lysyl-[glycine-cleavage complex H protein] + glycine + H(+) = N(6)-[(R)-S(8)-aminomethyldihydrolipoyl]-L-lysyl-[glycine-cleavage complex H protein] + CO2. Functionally, the glycine cleavage system catalyzes the degradation of glycine. The P protein binds the alpha-amino group of glycine through its pyridoxal phosphate cofactor; CO(2) is released and the remaining methylamine moiety is then transferred to the lipoamide cofactor of the H protein. The protein is Glycine dehydrogenase (decarboxylating) of Mycobacterium tuberculosis (strain ATCC 25177 / H37Ra).